A 204-amino-acid polypeptide reads, in one-letter code: Spermatogenesis-associated protein 46 (204 aa).

Positions 101–120 (SSSSQENTYPREANRKSKHG) are disordered.

Testis-specific.

The protein localises to the nucleus membrane. In terms of biological role, plays a role in spermiogenesis and fertilization. This chain is Spermatogenesis-associated protein 46 (Spata46), found in Mus musculus (Mouse).